The chain runs to 603 residues: Elongation factor 4 (603 aa).

The 183-residue stretch at 2-184 (NHIRNFSIIA…AIVHKMPAPR (183 aa)) folds into the tr-type G domain. Residues 14–19 (DHGKST) and 131–134 (NKMD) contribute to the GTP site.

The protein belongs to the TRAFAC class translation factor GTPase superfamily. Classic translation factor GTPase family. LepA subfamily.

The protein localises to the cell inner membrane. The enzyme catalyses GTP + H2O = GDP + phosphate + H(+). In terms of biological role, required for accurate and efficient protein synthesis under certain stress conditions. May act as a fidelity factor of the translation reaction, by catalyzing a one-codon backward translocation of tRNAs on improperly translocated ribosomes. Back-translocation proceeds from a post-translocation (POST) complex to a pre-translocation (PRE) complex, thus giving elongation factor G a second chance to translocate the tRNAs correctly. Binds to ribosomes in a GTP-dependent manner. This chain is Elongation factor 4, found in Variovorax paradoxus (strain S110).